The chain runs to 101 residues: Urinary protein 2 (101 aa).

The signal sequence occupies residues 1 to 21; it reads MGKHILLLPLGLSLLMSSLLA. Residues 22–99 form the UPAR/Ly6 domain; the sequence is LQCFRCTSFD…CSATPFCNMV (78 aa). 5 disulfides stabilise this stretch: Cys24/Cys51, Cys27/Cys36, Cys43/Cys70, Cys73/Cys89, and Cys90/Cys96. N-linked (GlcNAc...) asparagine glycosylation is found at Asn67 and Asn74.

Post-translationally, N-glycosylated.

The protein resides in the secreted. In Rattus norvegicus (Rat), this protein is Urinary protein 2.